Consider the following 122-residue polypeptide: MALSKEDILKWLEEAKTAEVVELITAIEEKFGVTAAAVAVAAGPGPAAGAEEQTEFDVMLVSFGDSKINVIKEVRAITGLGLGEAKALVEAVPKAVKEGVSKADAEEIKKKLEAVGAKVEIK.

The protein belongs to the bacterial ribosomal protein bL12 family. Homodimer. Part of the ribosomal stalk of the 50S ribosomal subunit. Forms a multimeric L10(L12)X complex, where L10 forms an elongated spine to which 2 to 4 L12 dimers bind in a sequential fashion. Binds GTP-bound translation factors.

Its function is as follows. Forms part of the ribosomal stalk which helps the ribosome interact with GTP-bound translation factors. Is thus essential for accurate translation. This Borrelia hermsii (strain HS1 / DAH) protein is Large ribosomal subunit protein bL12.